We begin with the raw amino-acid sequence, 187 residues long: Guanylate kinase (187 aa).

S2 carries the N-acetylserine modification. Residues 2 to 184 (SRPIVISGPS…AYKELKDFIF (183 aa)) enclose the Guanylate kinase-like domain. An ATP-binding site is contributed by 9–16 (GPSGTGKS). GMP is bound by residues S35, 39–42 (RTPR), Y51, E70, 79–81 (YGS), and D101. A Phosphoserine modification is found at S149. Y157 bears the Phosphotyrosine mark.

The protein belongs to the guanylate kinase family. Monomer.

The enzyme catalyses GMP + ATP = GDP + ADP. In terms of biological role, catalyzes the reversible transfer of the terminal phosphoryl group of ATP to the acceptor molecule GMP. Essential for recycling GMP and indirectly, cGMP. The sequence is that of Guanylate kinase (GUK1) from Saccharomyces cerevisiae (strain ATCC 204508 / S288c) (Baker's yeast).